A 211-amino-acid polypeptide reads, in one-letter code: Troponin I, cardiac muscle (211 aa).

The segment at 1–25 (MADESSDAAGEPQPAPAPVRRRSSA) is disordered. Ala2 carries the N-acetylalanine modification. A phosphoserine mark is found at Ser5 and Ser6. Phosphoserine; by PKA and PKD/PRKD1 occurs at positions 23 and 24. The residue at position 27 (Tyr27) is a Phosphotyrosine. Thr32 bears the Phosphothreonine; by STK4/MST1 mark. Positions 33-80 (EPHAKKKSKISASRKLQLKTLMLQIAKQEMEREAEERRGEKGRVLSTR) are involved in binding TNC. Residues Ser43 and Ser45 each carry the phosphoserine; by PKC/PRKCE modification. Thr52 carries the post-translational modification Phosphothreonine; by STK4/MST1. Ser78 is modified (phosphoserine). Thr79 is modified (phosphothreonine). Phosphothreonine; by STK4/MST1 occurs at positions 130 and 144. The segment at 130–151 (TQKIYDLRGKFKRPTLRRVRIS) is involved in binding TNC and actin. A Phosphoserine; by PAK3 modification is found at Ser151. A phosphoserine mark is found at Ser167 and Ser200.

It belongs to the troponin I family. As to quaternary structure, interacts with TRIM63. Binds to actin and tropomyosin. Interacts with STK4/MST1. Post-translationally, phosphorylated at Ser-23 and Ser-24 by PRKD1; phosphorylation reduces myofilament calcium sensitivity. Phosphorylated preferentially at Thr-32. Phosphorylation by STK4/MST1 alters its binding affinity to TNNC1 (cardiac Tn-C) and TNNT2 (cardiac Tn-T). Phosphorylated at Ser-43 and Ser-45 by PRKCE; phosphorylation increases myocardium contractile dysfunction.

Its function is as follows. Troponin I is the inhibitory subunit of troponin, the thin filament regulatory complex which confers calcium-sensitivity to striated muscle actomyosin ATPase activity. This chain is Troponin I, cardiac muscle (Tnni3), found in Rattus norvegicus (Rat).